Consider the following 141-residue polypeptide: MPKKTIKIVVEGGNVKPGPPLGPTLSQLKLNVGEVVKKINEATAQFKGMTVPVTIDVDLDTKEFEISVGIPTTSSLLLKKAGAEAPSGDPAHKKIANVSLEDIIDVAITKKPSLTAKTLKAAVKSILGTARQIGLTVDKKD.

It belongs to the universal ribosomal protein uL11 family. In terms of assembly, part of the ribosomal stalk of the 50S ribosomal subunit. Interacts with L10 and the large rRNA to form the base of the stalk. L10 forms an elongated spine to which L12 dimers bind in a sequential fashion forming a multimeric L10(L12)X complex.

Functionally, forms part of the ribosomal stalk which helps the ribosome interact with GTP-bound translation factors. This Acidianus ambivalens (Desulfurolobus ambivalens) protein is Large ribosomal subunit protein uL11.